An 826-amino-acid polypeptide reads, in one-letter code: U-box domain-containing protein 4 (826 aa).

The stretch at 172–204 (RSNQEILIEAVALERQKEMAEQSENNAEVEFLD) forms a coiled coil. One can recognise a U-box domain in the interval 229–303 (AILADFFCPL…ANWCETNDVK (75 aa)). Positions 330 to 501 (GADVSARKVS…TRRDLSDFSP (172 aa)) are disordered. The segment covering 347–360 (ASSSETGKPSFSSR) has biased composition (polar residues). Basic and acidic residues predominate over residues 391 to 414 (DARRGSLNDFEDRSNDSRELRTDA). Position 396 is a phosphoserine (S396). Residues 416–428 (GRSSVSSTTRGSV) show a composition bias toward low complexity. Over residues 492–501 (TRRDLSDFSP) the composition is skewed to basic and acidic residues. ARM repeat units lie at residues 530–570 (NETR…LLAK), 573–612 (MDNRIVIGNSGAIVLLVELLYSTDSATQENAVTALLNLSI), 614–653 (DNNKKAIADAGAIEPLIHVLENGSSEAKENSAATLFSLSV), 655–694 (EENKIKIGQSGAIGPLVDLLGNGTPRGKKDAATALFNLSI), 696–734 (QENKAMIVQSGAVRYLIDLMDPAAGMVDKAVAVLANLAT), 736–775 (PEGRNAIGQEGGIPLLVEVVELGSARGKENAAAALLQLST), and 778–817 (GRFCNMVLQEGAVPPLVALSQSGTPRAREKAQALLSYFRN).

It catalyses the reaction S-ubiquitinyl-[E2 ubiquitin-conjugating enzyme]-L-cysteine + [acceptor protein]-L-lysine = [E2 ubiquitin-conjugating enzyme]-L-cysteine + N(6)-ubiquitinyl-[acceptor protein]-L-lysine.. The protein operates within protein modification; protein ubiquitination. In terms of biological role, functions as an E3 ubiquitin ligase. The polypeptide is U-box domain-containing protein 4 (PUB4) (Arabidopsis thaliana (Mouse-ear cress)).